A 614-amino-acid polypeptide reads, in one-letter code: Pyruvate decarboxylase 2 (614 aa).

Residues Asp-50 and His-137 each coordinate substrate. Positions 415–523 (DSWFNCQKLK…FLINNGGYTI (109 aa)) are thiamine pyrophosphate binding. Asp-491, Asn-518, and Gly-520 together coordinate Mg(2+). Residue Glu-524 participates in substrate binding.

It belongs to the TPP enzyme family. As to quaternary structure, homotetramer. The cofactor is a metal cation. Thiamine diphosphate serves as cofactor. Pollen.

The enzyme catalyses a 2-oxocarboxylate + H(+) = an aldehyde + CO2. In Nicotiana tabacum (Common tobacco), this protein is Pyruvate decarboxylase 2 (PDC2).